The sequence spans 338 residues: S-adenosylmethionine:tRNA ribosyltransferase-isomerase (338 aa).

This sequence belongs to the QueA family. As to quaternary structure, monomer.

It is found in the cytoplasm. It catalyses the reaction 7-aminomethyl-7-carbaguanosine(34) in tRNA + S-adenosyl-L-methionine = epoxyqueuosine(34) in tRNA + adenine + L-methionine + 2 H(+). Its pathway is tRNA modification; tRNA-queuosine biosynthesis. Its function is as follows. Transfers and isomerizes the ribose moiety from AdoMet to the 7-aminomethyl group of 7-deazaguanine (preQ1-tRNA) to give epoxyqueuosine (oQ-tRNA). The chain is S-adenosylmethionine:tRNA ribosyltransferase-isomerase from Francisella philomiragia subsp. philomiragia (strain ATCC 25017 / CCUG 19701 / FSC 153 / O#319-036).